Consider the following 137-residue polypeptide: FAD synthase (137 aa).

ATP contacts are provided by residues threonine 5 to phenylalanine 6, histidine 10 to histidine 13, and aspartate 88.

The protein belongs to the archaeal FAD synthase family. Homodimer. The cofactor is a divalent metal cation.

It catalyses the reaction FMN + ATP + H(+) = FAD + diphosphate. The protein operates within cofactor biosynthesis; FAD biosynthesis; FAD from FMN: step 1/1. Its function is as follows. Catalyzes the transfer of the AMP portion of ATP to flavin mononucleotide (FMN) to produce flavin adenine dinucleotide (FAD) coenzyme. This chain is FAD synthase, found in Archaeoglobus fulgidus (strain ATCC 49558 / DSM 4304 / JCM 9628 / NBRC 100126 / VC-16).